Here is an 80-residue protein sequence, read N- to C-terminus: MTTTAAPRRPFFRRRKTCPFSGPNAPKIDYKDTRLLSRYISERGKIVPSRITAVSAKKQRELAQAIKRARFLGLLPYVIR.

The protein belongs to the bacterial ribosomal protein bS18 family. In terms of assembly, part of the 30S ribosomal subunit. Forms a tight heterodimer with protein bS6.

Binds as a heterodimer with protein bS6 to the central domain of the 16S rRNA, where it helps stabilize the platform of the 30S subunit. This Methylocella silvestris (strain DSM 15510 / CIP 108128 / LMG 27833 / NCIMB 13906 / BL2) protein is Small ribosomal subunit protein bS18.